The following is a 101-amino-acid chain: NAD(P)H-quinone oxidoreductase subunit 4L (101 aa).

3 helical membrane-spanning segments follow: residues 3–23 (LQYFLLIAAALFCIGVYGLVT), 30–50 (VLMSIELMLNAVNLNLMAFSN), and 64–84 (IFVITIAAAEAAVGLAIVLAI).

Belongs to the complex I subunit 4L family. NDH-1 can be composed of about 15 different subunits; different subcomplexes with different compositions have been identified which probably have different functions.

The protein resides in the cellular thylakoid membrane. It catalyses the reaction a plastoquinone + NADH + (n+1) H(+)(in) = a plastoquinol + NAD(+) + n H(+)(out). The catalysed reaction is a plastoquinone + NADPH + (n+1) H(+)(in) = a plastoquinol + NADP(+) + n H(+)(out). In terms of biological role, NDH-1 shuttles electrons from an unknown electron donor, via FMN and iron-sulfur (Fe-S) centers, to quinones in the respiratory and/or the photosynthetic chain. The immediate electron acceptor for the enzyme in this species is believed to be plastoquinone. Couples the redox reaction to proton translocation, and thus conserves the redox energy in a proton gradient. Cyanobacterial NDH-1 also plays a role in inorganic carbon-concentration. The protein is NAD(P)H-quinone oxidoreductase subunit 4L of Leptolyngbya boryana (Plectonema boryanum).